The following is a 262-amino-acid chain: GTP cyclohydrolase 1 type 2 homolog (262 aa).

Positions 68, 69, 108, 226, and 229 each coordinate a divalent metal cation.

It belongs to the GTP cyclohydrolase I type 2/NIF3 family. As to quaternary structure, homohexamer.

The polypeptide is GTP cyclohydrolase 1 type 2 homolog (Ureaplasma parvum serovar 3 (strain ATCC 700970)).